A 103-amino-acid chain; its full sequence is Nucleoid-associated protein BH0035 (103 aa).

Positions 1 to 20 are enriched in low complexity; the sequence is MKNMGQMMKQMQKMQKQMMK. The segment at 1-29 is disordered; sequence MKNMGQMMKQMQKMQKQMMKAQEELKEKT.

It belongs to the YbaB/EbfC family. As to quaternary structure, homodimer.

It is found in the cytoplasm. Its subcellular location is the nucleoid. Its function is as follows. Binds to DNA and alters its conformation. May be involved in regulation of gene expression, nucleoid organization and DNA protection. The protein is Nucleoid-associated protein BH0035 of Halalkalibacterium halodurans (strain ATCC BAA-125 / DSM 18197 / FERM 7344 / JCM 9153 / C-125) (Bacillus halodurans).